The primary structure comprises 347 residues: RNA 3'-terminal phosphate cyclase (347 aa).

Residues glutamine 109 and 290 to 294 (YLADQ) each bind ATP. Catalysis depends on histidine 315, which acts as the Tele-AMP-histidine intermediate.

It belongs to the RNA 3'-terminal cyclase family. Type 1 subfamily.

It localises to the cytoplasm. The enzyme catalyses a 3'-end 3'-phospho-ribonucleotide-RNA + ATP = a 3'-end 2',3'-cyclophospho-ribonucleotide-RNA + AMP + diphosphate. In terms of biological role, catalyzes the conversion of 3'-phosphate to a 2',3'-cyclic phosphodiester at the end of RNA. The mechanism of action of the enzyme occurs in 3 steps: (A) adenylation of the enzyme by ATP; (B) transfer of adenylate to an RNA-N3'P to produce RNA-N3'PP5'A; (C) and attack of the adjacent 2'-hydroxyl on the 3'-phosphorus in the diester linkage to produce the cyclic end product. The biological role of this enzyme is unknown but it is likely to function in some aspects of cellular RNA processing. This is RNA 3'-terminal phosphate cyclase from Ralstonia nicotianae (strain ATCC BAA-1114 / GMI1000) (Ralstonia solanacearum).